Reading from the N-terminus, the 38-residue chain is Photosystem II reaction center protein L (38 aa).

A helical transmembrane segment spans residues 17-37 (SLYWGLLLIFVLAILFSSYIF).

The protein belongs to the PsbL family. In terms of assembly, PSII is composed of 1 copy each of membrane proteins PsbA, PsbB, PsbC, PsbD, PsbE, PsbF, PsbH, PsbI, PsbJ, PsbK, PsbL, PsbM, PsbT, PsbX, PsbY, PsbZ, Psb30/Ycf12, at least 3 peripheral proteins of the oxygen-evolving complex and a large number of cofactors. It forms dimeric complexes.

It localises to the plastid. The protein localises to the chloroplast thylakoid membrane. One of the components of the core complex of photosystem II (PSII). PSII is a light-driven water:plastoquinone oxidoreductase that uses light energy to abstract electrons from H(2)O, generating O(2) and a proton gradient subsequently used for ATP formation. It consists of a core antenna complex that captures photons, and an electron transfer chain that converts photonic excitation into a charge separation. This subunit is found at the monomer-monomer interface and is required for correct PSII assembly and/or dimerization. The sequence is that of Photosystem II reaction center protein L from Nephroselmis olivacea (Green alga).